Reading from the N-terminus, the 156-residue chain is Iron sulfur cluster assembly protein 2, mitochondrial (156 aa).

The transit peptide at 1-26 (MFARLANPAHFKPLTGSHITRAAKRL) directs the protein to the mitochondrion.

This sequence belongs to the NifU family. Component of the core Fe-S cluster (ISC) assembly machinery. Interacts with frataxin. Interacts with the mitochondrial co-chaperones JAC1 and SSQ1. Interacts with NFS1. Interacts with ferredoxin YAH1; interacts with the reduced form. Requires [2Fe-2S] cluster as cofactor.

The protein localises to the mitochondrion matrix. The protein operates within cofactor biosynthesis; iron-sulfur cluster biosynthesis. In terms of biological role, scaffold protein for the de novo synthesis of iron-sulfur (Fe-S) clusters within mitochondria, which is required for maturation of both mitochondrial and cytoplasmic [2Fe-2S] and [4Fe-4S] proteins. First, a [2Fe-2S] cluster is transiently assembled on the scaffold proteins ISU1 and ISU2. In a second step, the cluster is released from ISU1/ISU2, transferred to glutaredoxin GRX5, followed by the formation of mitochondrial [2Fe-2S] proteins, the synthesis of [4Fe-4S] clusters and their target-specific insertion into the recipient apoproteins. Cluster assembly on ISU1/ISU2 depends on the function of the cysteine desulfurase complex NFS1-ISD11, which serves as the sulfur donor for cluster synthesis, the iron-binding protein frataxin (YFH1) as the putative iron donor, and the electron transfer chain comprised of ferredoxin reductase ARH1 and ferredoxin YAH1, which receive their electrons from NADH. Fe-S cluster release from ISU1/ISU2 is achieved by interaction with the Hsp70 chaperone SSQ1, assisted by the DnaJ-like co-chaperone JAC1 and the nucleotide exchange factor MGE1. ISU1 is the major isoform in yeast, while ISU2 is not detectable in cells grown to stationary phase. Also involved in production of a sulfur precursor required for thiolation of cytoplasmic tRNAs. This chain is Iron sulfur cluster assembly protein 2, mitochondrial, found in Saccharomyces cerevisiae (strain ATCC 204508 / S288c) (Baker's yeast).